The sequence spans 198 residues: MRWPVPPVGYLLLGGQGLLLTFSLISSQNQTSPVTYPDLNLSAAPEPRDPLGPLVLCSYLPEEFVECDDPVDHMGNGTAQQELRYGCKKFGGQAYGDVEHTQVMCRALDGIECDGPRSFLRGNKPCIKYTGHYFITTLLYSFFLGCFGVDRFCLGHTGTAVGKLLTLGGLGIWWFVDLILLITGGLMPSDNSNWCTIY.

Residues 1–27 (MRWPVPPVGYLLLGGQGLLLTFSLISS) form the signal peptide. The Extracellular portion of the chain corresponds to 28–128 (QNQTSPVTYP…FLRGNKPCIK (101 aa)). Residues Asn-29, Asn-40, and Asn-76 are each glycosylated (N-linked (GlcNAc...) asparagine). A helical membrane pass occupies residues 129–149 (YTGHYFITTLLYSFFLGCFGV). Residues 131–179 (GHYFITTLLYSFFLGCFGVDRFCLGHTGTAVGKLLTLGGLGIWWFVDLI) enclose the TM2 domain. Residues 150–166 (DRFCLGHTGTAVGKLLT) are Cytoplasmic-facing. A helical membrane pass occupies residues 167–187 (LGGLGIWWFVDLILLITGGLM). Residues 188-198 (PSDNSNWCTIY) are Extracellular-facing.

The protein belongs to the TM2 family.

It is found in the membrane. The chain is TM2 domain-containing protein 2 (tm2d2) from Xenopus tropicalis (Western clawed frog).